The following is a 378-amino-acid chain: Anhydro-N-acetylmuramic acid kinase (378 aa).

ATP is bound at residue 9–16 (GTSVDGID).

The protein belongs to the anhydro-N-acetylmuramic acid kinase family.

It carries out the reaction 1,6-anhydro-N-acetyl-beta-muramate + ATP + H2O = N-acetyl-D-muramate 6-phosphate + ADP + H(+). Its pathway is amino-sugar metabolism; 1,6-anhydro-N-acetylmuramate degradation. The protein operates within cell wall biogenesis; peptidoglycan recycling. Its function is as follows. Catalyzes the specific phosphorylation of 1,6-anhydro-N-acetylmuramic acid (anhMurNAc) with the simultaneous cleavage of the 1,6-anhydro ring, generating MurNAc-6-P. Is required for the utilization of anhMurNAc either imported from the medium or derived from its own cell wall murein, and thus plays a role in cell wall recycling. The sequence is that of Anhydro-N-acetylmuramic acid kinase from Microcystis aeruginosa (strain NIES-843 / IAM M-2473).